The chain runs to 110 residues: Parvalbumin alpha (110 aa).

Ser-2 is subject to N-acetylserine. Ser-2 and Ser-24 each carry phosphoserine. 2 consecutive EF-hand domains span residues 39–74 (KSAD…FSPD) and 78–110 (LSAK…VAES). 11 residues coordinate Ca(2+): Asp-52, Asp-54, Ser-56, Phe-58, Glu-60, Glu-63, Asp-91, Asp-93, Asp-95, Lys-97, and Glu-102.

Functionally, in muscle, parvalbumin is thought to be involved in relaxation after contraction. It binds two calcium ions. In Homo sapiens (Human), this protein is Parvalbumin alpha (PVALB).